Consider the following 505-residue polypeptide: MLYFRYGFLVVWCAAGVSAAYGADAPAILDDKALLQVQRSVSDKWAESDWKVENDAPRVVDGDFLLAHPKMLEHSLRDALNGNQADLIASLADLYAKLPDYDAVLYGRARALLAKLAGRPAEAVARYRELHGENAADERILLDLAAAEFDDFRLKSAERHFAEAAKLDLPAPVLENVGRFRKKTEGLTGWRFSGGISPAVNRNANNAAPQYCRQNGGRQICSVSRAERAAGLNYEIEAEKLTPLADNHYLLFRSNIGGTSYYFSKKSAYDDGFGRAYLGWQYKNARQTAGILPFYQVQLSGSDGFDAKTKRVNNRRLPPYMLAHGVGVQLSHTYRPNPGWQFSVALEHYRQRYREQDRAEYNNGRQDGFYVSSAKRLGESATVFGGWQFVRFVPKRETVGGAVNNAAYRRNGVYAGWAQEWRQLGGLNSRVSASYARRNYKGIAAFSTEAQRNREWNVSLALSHDKLSYKGIVPALNYRFGRTESNVPYAKRRNSEVFVSADWRF.

Positions 1-19 (MLYFRYGFLVVWCAAGVSA) are cleaved as a signal peptide. The tract at residues 23 to 188 (ADAPAILDDK…RFRKKTEGLT (166 aa)) is N-terminal domain. Residues 189–505 (GWRFSGGISP…EVFVSADWRF (317 aa)) are C-terminal probable beta barrel. Beta stranded transmembrane passes span 190-200 (WRFSGGISPAV), 232-243 (LNYEIEAEKLTP), 248-258 (HYLLFRSNIGG), 273-283 (FGRAYLGWQYK), 287-297 (QTAGILPFYQV), 326-335 (VGVQLSHTYR), 340-350 (WQFSVALEHYR), 368-377 (GFYVSSAKRL), 381-391 (ATVFGGWQFVR), 411-420 (NGVYAGWAQE), 427-437 (LNSRVSASYAR), 456-465 (WNVSLALSHD), 472-482 (IVPALNYRFGR), and 495-505 (SEVFVSADWRF).

This sequence belongs to the Slam family.

The protein resides in the cell outer membrane. In terms of biological role, required for correct export to the cell surface of cell outer membrane lipoprotein HpuA heterologously in E.coli (hpuA does not exist in N.meningitidis strain MC58). This is Surface lipoprotein assembly modifier 2 from Neisseria meningitidis serogroup B (strain ATCC BAA-335 / MC58).